The primary structure comprises 203 residues: High frequency lysogenization protein HflD homolog (203 aa).

The protein belongs to the HflD family.

Its subcellular location is the cytoplasm. It is found in the cell inner membrane. This is High frequency lysogenization protein HflD homolog from Histophilus somni (strain 2336) (Haemophilus somnus).